The sequence spans 130 residues: Small ribosomal subunit protein uS11 (130 aa).

This sequence belongs to the universal ribosomal protein uS11 family. In terms of assembly, part of the 30S ribosomal subunit. Interacts with proteins S7 and S18. Binds to IF-3.

Functionally, located on the platform of the 30S subunit, it bridges several disparate RNA helices of the 16S rRNA. Forms part of the Shine-Dalgarno cleft in the 70S ribosome. This is Small ribosomal subunit protein uS11 from Prochlorococcus marinus (strain MIT 9303).